The following is a 71-amino-acid chain: MNDKVAATLVLVVTYSIVGASLWCLTYAWHDETKLYYWCIVQLLPVMLWVWCVISWCGAQLFGYAKRGKAD.

Helical transmembrane passes span 5–25 (VAAT…LWCL) and 35–55 (LYYW…CVIS).

In terms of assembly, interacts with GPI2, suggesting that it is a component of the GPI-GnT complex, probably composed of GPI1, GPI2, GPI3, GPI15, and ERI1.

It localises to the endoplasmic reticulum membrane. It functions in the pathway glycolipid biosynthesis; glycosylphosphatidylinositol-anchor biosynthesis. Functionally, probable component of the GPI-GlcNAc transferase (GPI-GnT) complex in the endoplasmic reticulum, a complex that catalyzes transfer of GlcNAc from UDP-GlcNAc to an acceptor phosphatidylinositol, the first step in the production of GPI-anchors for cell surface proteins. The protein is Phosphatidylinositol N-acetylglucosaminyltransferase ERI1 subunit (ERI1) of Eremothecium gossypii (strain ATCC 10895 / CBS 109.51 / FGSC 9923 / NRRL Y-1056) (Yeast).